Consider the following 61-residue polypeptide: Sperm protamine P1 (61 aa).

Residues 1 to 61 (MARFRRSRSR…RSSRRSRRRN (61 aa)) are disordered.

It belongs to the protamine P1 family. Testis.

The protein localises to the nucleus. It localises to the chromosome. Protamines substitute for histones in the chromatin of sperm during the haploid phase of spermatogenesis. They compact sperm DNA into a highly condensed, stable and inactive complex. The protein is Sperm protamine P1 (PRM1) of Ornithorhynchus anatinus (Duckbill platypus).